Here is a 399-residue protein sequence, read N- to C-terminus: Coenzyme A biosynthesis bifunctional protein CoaBC (399 aa).

Residues 1–190 are phosphopantothenoylcysteine decarboxylase; the sequence is MQSLAGKKIL…FAPKILVGKR (190 aa). The active-site Proton donor is the C159. The phosphopantothenate--cysteine ligase stretch occupies residues 191-399; the sequence is VLITAGPTRE…AVMHLIHEQM (209 aa). CTP is bound by residues D279, K289, 307–310, F326, K340, and K344; that span reads PDIV.

This sequence in the N-terminal section; belongs to the HFCD (homo-oligomeric flavin containing Cys decarboxylase) superfamily. In the C-terminal section; belongs to the PPC synthetase family. Requires Mg(2+) as cofactor. FMN serves as cofactor.

It catalyses the reaction N-[(R)-4-phosphopantothenoyl]-L-cysteine + H(+) = (R)-4'-phosphopantetheine + CO2. The catalysed reaction is (R)-4'-phosphopantothenate + L-cysteine + CTP = N-[(R)-4-phosphopantothenoyl]-L-cysteine + CMP + diphosphate + H(+). Its pathway is cofactor biosynthesis; coenzyme A biosynthesis; CoA from (R)-pantothenate: step 2/5. It functions in the pathway cofactor biosynthesis; coenzyme A biosynthesis; CoA from (R)-pantothenate: step 3/5. In terms of biological role, catalyzes two sequential steps in the biosynthesis of coenzyme A. In the first step cysteine is conjugated to 4'-phosphopantothenate to form 4-phosphopantothenoylcysteine. In the second step the latter compound is decarboxylated to form 4'-phosphopantotheine. This chain is Coenzyme A biosynthesis bifunctional protein CoaBC, found in Vibrio cholerae serotype O1 (strain ATCC 39315 / El Tor Inaba N16961).